The primary structure comprises 513 residues: Catalase (513 aa).

A signal peptide spans 1 to 30 (MNPSLNAFRPGRLLVAASLTASLLSLSVQA). Active-site residues include His81 and Asn153. Tyr361 serves as a coordination point for heme. Polar residues predominate over residues 391–407 (DGALNAGHSTSGVNYQP). Residues 391–413 (DGALNAGHSTSGVNYQPSRLDPR) are disordered.

This sequence belongs to the catalase family. It depends on heme as a cofactor.

It localises to the periplasm. The enzyme catalyses 2 H2O2 = O2 + 2 H2O. In terms of biological role, decomposes hydrogen peroxide into water and oxygen; serves to protect cells from the toxic effects of hydrogen peroxide. The sequence is that of Catalase (katB) from Pseudomonas aeruginosa (strain ATCC 15692 / DSM 22644 / CIP 104116 / JCM 14847 / LMG 12228 / 1C / PRS 101 / PAO1).